The sequence spans 454 residues: Tetrahydroanabasine acetyltransferase (454 aa).

Residues histidine 164 and aspartate 389 each act as proton acceptor in the active site.

It belongs to the plant acyltransferase family. In terms of assembly, monomer.

It carries out the reaction tetrahydroanabasine + acetyl-CoA = ammodendrine + CoA. It participates in alkaloid biosynthesis. Its function is as follows. Tetrahydroanabasine acetyltransferase involved in the accumulation of quinolizidine type antinutritional alkaloids (QAs) natural products. QAs impart a bitter taste to plants, acting as repellents and toxicants for herbivores and predators, and possess a variety of pharmacological effects, including sedative, anticonvulsant, anti-inflammatory, antiviral, antitumor, antipyretic, anti-hepatitis B, antifibrotic, antiallergic, antidiarrheal, analgesic and antimicrobial activities. Mediates the conversion of tetrahydroanabasine into ammodendrine. The sequence is that of Tetrahydroanabasine acetyltransferase from Lupinus albus (White lupine).